Consider the following 218-residue polypeptide: Outer-membrane lipoprotein LolB (218 aa).

The first 24 residues, 1–24 (MNNLSYLTKIPLIWVLLSVTLLSA), serve as a signal peptide directing secretion. C25 carries N-palmitoyl cysteine lipidation. The S-diacylglycerol cysteine moiety is linked to residue C25.

It belongs to the LolB family. Monomer.

It is found in the cell outer membrane. Its function is as follows. Plays a critical role in the incorporation of lipoproteins in the outer membrane after they are released by the LolA protein. The chain is Outer-membrane lipoprotein LolB from Shewanella sediminis (strain HAW-EB3).